Consider the following 89-residue polypeptide: Acylphosphatase (89 aa).

One can recognise an Acylphosphatase-like domain in the interval arginine 3–arginine 89. Catalysis depends on residues arginine 18 and asparagine 36.

Belongs to the acylphosphatase family.

The enzyme catalyses an acyl phosphate + H2O = a carboxylate + phosphate + H(+). This Rhodococcus jostii (strain RHA1) protein is Acylphosphatase (acyP).